The sequence spans 734 residues: Photosystem I P700 chlorophyll a apoprotein A2 (734 aa).

Transmembrane regions (helical) follow at residues 46–69 (IFASHFGQLAIIFLWTSGNLFHVA), 135–158 (LYTGALFLFLISAISLIAGWLHLQ), 175–199 (LNHHLAGLFGVSSLAWTGHLVHVAI), 273–291 (IAHHHLAITLLFFVAGHMY), 330–353 (LHFQLGLALASLGVFTSLVAQHMY), 369–395 (AALYAHHQYIAGFIMTGAFAHGAIFFI), 417–439 (AIISHLSWVSLFLGFHTLGLYIH), and 517–535 (FLVHHAIALGLHTTTLILV). Residues C559 and C568 each coordinate [4Fe-4S] cluster. Transmembrane regions (helical) follow at residues 575–596 (AFYLAVFWMLNTIGWVTFYWHW) and 643–665 (LSVWAWMFLFGHLVWATGFMFLI). Chlorophyll a-binding residues include H654, M662, and Y670. W671 lines the phylloquinone pocket. The helical transmembrane segment at 707–727 (FVGLAHFSVGYIFTYAAFLIA) threads the bilayer.

It belongs to the PsaA/PsaB family. In terms of assembly, the PsaA/B heterodimer binds the P700 chlorophyll special pair and subsequent electron acceptors. PSI consists of a core antenna complex that captures photons, and an electron transfer chain that converts photonic excitation into a charge separation. The eukaryotic PSI reaction center is composed of at least 11 subunits. It depends on P700 is a chlorophyll a/chlorophyll a' dimer, A0 is one or more chlorophyll a, A1 is one or both phylloquinones and FX is a shared 4Fe-4S iron-sulfur center. as a cofactor.

Its subcellular location is the plastid membrane. It catalyses the reaction reduced [plastocyanin] + hnu + oxidized [2Fe-2S]-[ferredoxin] = oxidized [plastocyanin] + reduced [2Fe-2S]-[ferredoxin]. In terms of biological role, psaA and PsaB bind P700, the primary electron donor of photosystem I (PSI), as well as the electron acceptors A0, A1 and FX. PSI is a plastocyanin-ferredoxin oxidoreductase, converting photonic excitation into a charge separation, which transfers an electron from the donor P700 chlorophyll pair to the spectroscopically characterized acceptors A0, A1, FX, FA and FB in turn. Oxidized P700 is reduced on the lumenal side of the thylakoid membrane by plastocyanin. The polypeptide is Photosystem I P700 chlorophyll a apoprotein A2 (Cuscuta sandwichiana (Kauna'oa)).